Here is a 666-residue protein sequence, read N- to C-terminus: Probable potassium transport system protein Kup (666 aa).

12 helical membrane-spanning segments follow: residues 16–36 (GFII…LYTI), 58–78 (ISLI…LIAL), 100–120 (PWLI…GALT), 141–161 (IYQN…VLFG), 165–185 (FGTG…FSFL), 221–241 (IFIL…YSDL), 253–273 (WPFV…WILA), 294–314 (VYLV…LISG), 343–363 (LYIP…VLAF), 373–393 (YGLA…YYLI), 399–419 (PILA…FFLA), and 424–444 (FMHG…VMFI).

The protein belongs to the HAK/KUP transporter (TC 2.A.72) family.

The protein resides in the cell membrane. It carries out the reaction K(+)(in) + H(+)(in) = K(+)(out) + H(+)(out). Its function is as follows. Transport of potassium into the cell. Likely operates as a K(+):H(+) symporter. This Streptococcus pyogenes serotype M1 protein is Probable potassium transport system protein Kup.